The following is a 171-amino-acid chain: S-ribosylhomocysteine lyase (171 aa).

Fe cation-binding residues include histidine 54, histidine 58, and cysteine 128.

The protein belongs to the LuxS family. In terms of assembly, homodimer. Requires Fe cation as cofactor.

The enzyme catalyses S-(5-deoxy-D-ribos-5-yl)-L-homocysteine = (S)-4,5-dihydroxypentane-2,3-dione + L-homocysteine. Functionally, involved in the synthesis of autoinducer 2 (AI-2) which is secreted by bacteria and is used to communicate both the cell density and the metabolic potential of the environment. The regulation of gene expression in response to changes in cell density is called quorum sensing. Catalyzes the transformation of S-ribosylhomocysteine (RHC) to homocysteine (HC) and 4,5-dihydroxy-2,3-pentadione (DPD). The polypeptide is S-ribosylhomocysteine lyase (Enterobacter sp. (strain 638)).